Reading from the N-terminus, the 344-residue chain is Uroporphyrinogen decarboxylase (344 aa).

Residues 26–30 (RQAGR), Phe45, Asp75, Tyr151, Ser206, and His320 contribute to the substrate site.

This sequence belongs to the uroporphyrinogen decarboxylase family. As to quaternary structure, homodimer.

It localises to the cytoplasm. The enzyme catalyses uroporphyrinogen III + 4 H(+) = coproporphyrinogen III + 4 CO2. Its pathway is porphyrin-containing compound metabolism; protoporphyrin-IX biosynthesis; coproporphyrinogen-III from 5-aminolevulinate: step 4/4. Functionally, catalyzes the decarboxylation of four acetate groups of uroporphyrinogen-III to yield coproporphyrinogen-III. In Staphylococcus saprophyticus subsp. saprophyticus (strain ATCC 15305 / DSM 20229 / NCIMB 8711 / NCTC 7292 / S-41), this protein is Uroporphyrinogen decarboxylase.